Consider the following 793-residue polypeptide: MKKLVHKESQWEILSQLGTGAFGRVVKAKKINCDGTGIIIDICAIKIIKKSVFTKNEIEILKQLDHPLIVKYYGYGVGEIDDNIYIYMEYIDGYPVSSILRKQPKNQFPEDIISKIVIDLALILSYIHDNERKIIHRDLKCDNIMLVNDNTHSCDVNGNCSRNGGGSAKSANQSFFTEDCVCNVNGSGTDENCKSCKLKSKPIREIQGSCESCGSDLEQDSSSSSSSSSSTINNGQSSTCRLINCIYSVSKKIKLIDFGLSKGCDGDSKYYSLVGTSTHMPPEVALRNNTACRKSDIWSLGCTIIEMAGGNLFEKDIHGKPKIPDHLSASCKNFIQRCLTIDPNHRDDIINLISHNFIDRNRINEEIKEDISKSKIQFDDEFNEIISPGDLDSVNEVVFGFDFNQTIIPGTMNSVKKIEFGGSFNKELLIDSLPSATSITFGARFNNGNKPFAIGAIPSTCKSITFGWTYNQPFYPGILPNSLKKLIFQEGGDFNRILEVGSLPSSITTLILGDYDQKIEKGVLPSSLTILELGGEFNQPLEGSIPDSVTSLTLGYRFNKALTENCIPPNCKFLKFGSNFNKDLSPGILPSSIETLILGYCFNKELVEGSLPLSITTLIYEHRDNQKKVSYDYKEVTNLSKDLEENEIIPLTPESLPESITKLTIGKNQNHVIEFNCLPPDLQCLKYHGGFIRPLIPRDLPSSITSVKLYNYNYEIKKTSIPKSVTSLQLGSRHNKFTQIQSLSNFHPNMRDLKIYINDDDIDIYNLKDIIPQTITSLIINGDNIDLPIGIEN.

The 348-residue stretch at 11 to 358 (WEILSQLGTG…IINLISHNFI (348 aa)) folds into the Protein kinase domain. Residues 17-25 (LGTGAFGRV) and lysine 46 each bind ATP. Aspartate 138 acts as the Proton acceptor in catalysis. 5 FNIP repeats span residues 403-444 (FNQT…FGAR), 470-514 (YNQP…ILGD), 515-557 (YDQK…LGYR), 558-601 (FNKA…LGYC), and 691-733 (FIRP…LGSR).

It belongs to the protein kinase superfamily. STE Ser/Thr protein kinase family. Requires Mg(2+) as cofactor.

The catalysed reaction is L-seryl-[protein] + ATP = O-phospho-L-seryl-[protein] + ADP + H(+). It carries out the reaction L-threonyl-[protein] + ATP = O-phospho-L-threonyl-[protein] + ADP + H(+). The sequence is that of Probable serine/threonine-protein kinase fnkA from Dictyostelium discoideum (Social amoeba).